Here is a 157-residue protein sequence, read N- to C-terminus: Transcription elongation factor GreA (157 aa).

It belongs to the GreA/GreB family.

Functionally, necessary for efficient RNA polymerase transcription elongation past template-encoded arresting sites. The arresting sites in DNA have the property of trapping a certain fraction of elongating RNA polymerases that pass through, resulting in locked ternary complexes. Cleavage of the nascent transcript by cleavage factors such as GreA or GreB allows the resumption of elongation from the new 3'terminus. GreA releases sequences of 2 to 3 nucleotides. The chain is Transcription elongation factor GreA from Bartonella henselae (strain ATCC 49882 / DSM 28221 / CCUG 30454 / Houston 1) (Rochalimaea henselae).